The sequence spans 956 residues: Bifunctional glutamine synthetase adenylyltransferase/adenylyl-removing enzyme (956 aa).

Residues 1 to 441 (MLPLSTPLLA…IFTQLIGDDS (441 aa)) are adenylyl removase. The segment at 450-956 (HVPFKSLWLE…RRSWQQWLGE (507 aa)) is adenylyl transferase.

It belongs to the GlnE family. Mg(2+) is required as a cofactor.

The enzyme catalyses [glutamine synthetase]-O(4)-(5'-adenylyl)-L-tyrosine + phosphate = [glutamine synthetase]-L-tyrosine + ADP. It carries out the reaction [glutamine synthetase]-L-tyrosine + ATP = [glutamine synthetase]-O(4)-(5'-adenylyl)-L-tyrosine + diphosphate. Its function is as follows. Involved in the regulation of glutamine synthetase GlnA, a key enzyme in the process to assimilate ammonia. When cellular nitrogen levels are high, the C-terminal adenylyl transferase (AT) inactivates GlnA by covalent transfer of an adenylyl group from ATP to specific tyrosine residue of GlnA, thus reducing its activity. Conversely, when nitrogen levels are low, the N-terminal adenylyl removase (AR) activates GlnA by removing the adenylyl group by phosphorolysis, increasing its activity. The regulatory region of GlnE binds the signal transduction protein PII (GlnB) which indicates the nitrogen status of the cell. The protein is Bifunctional glutamine synthetase adenylyltransferase/adenylyl-removing enzyme of Photorhabdus laumondii subsp. laumondii (strain DSM 15139 / CIP 105565 / TT01) (Photorhabdus luminescens subsp. laumondii).